The sequence spans 316 residues: HPr kinase/phosphorylase (316 aa).

Residues H143 and K164 contribute to the active site. Residue 158 to 165 (GEAGSGKS) participates in ATP binding. A Mg(2+)-binding site is contributed by S165. D182 (proton acceptor; for phosphorylation activity. Proton donor; for dephosphorylation activity) is an active-site residue. Residues 206 to 215 (LEVRGLGVLN) are important for the catalytic mechanism of both phosphorylation and dephosphorylation. E207 serves as a coordination point for Mg(2+). R251 is an active-site residue. Residues 272-277 (PVMPGR) form an important for the catalytic mechanism of dephosphorylation region.

This sequence belongs to the HPrK/P family. As to quaternary structure, homohexamer. The cofactor is Mg(2+).

The enzyme catalyses [HPr protein]-L-serine + ATP = [HPr protein]-O-phospho-L-serine + ADP + H(+). It carries out the reaction [HPr protein]-O-phospho-L-serine + phosphate + H(+) = [HPr protein]-L-serine + diphosphate. In terms of biological role, catalyzes the ATP- as well as the pyrophosphate-dependent phosphorylation of a specific serine residue in HPr, a phosphocarrier protein of the phosphoenolpyruvate-dependent sugar phosphotransferase system (PTS). HprK/P also catalyzes the pyrophosphate-producing, inorganic phosphate-dependent dephosphorylation (phosphorolysis) of seryl-phosphorylated HPr (P-Ser-HPr). The polypeptide is HPr kinase/phosphorylase (Xylella fastidiosa (strain 9a5c)).